Reading from the N-terminus, the 146-residue chain is 3-dehydroquinate dehydratase (146 aa).

Residue Tyr-24 is the Proton acceptor of the active site. Residues Asn-75, His-81, and Asp-88 each contribute to the substrate site. His-101 acts as the Proton donor in catalysis. Residues 102–103 (LS) and Arg-112 contribute to the substrate site.

The protein belongs to the type-II 3-dehydroquinase family. As to quaternary structure, homododecamer.

The catalysed reaction is 3-dehydroquinate = 3-dehydroshikimate + H2O. It participates in metabolic intermediate biosynthesis; chorismate biosynthesis; chorismate from D-erythrose 4-phosphate and phosphoenolpyruvate: step 3/7. Functionally, catalyzes a trans-dehydration via an enolate intermediate. The polypeptide is 3-dehydroquinate dehydratase (Caulobacter vibrioides (strain ATCC 19089 / CIP 103742 / CB 15) (Caulobacter crescentus)).